We begin with the raw amino-acid sequence, 1146 residues long: DNA polymerase II large subunit (1146 aa).

Belongs to the archaeal DNA polymerase II family. In terms of assembly, heterodimer of a large subunit and a small subunit.

The enzyme catalyses DNA(n) + a 2'-deoxyribonucleoside 5'-triphosphate = DNA(n+1) + diphosphate. It catalyses the reaction Exonucleolytic cleavage in the 3'- to 5'-direction to yield nucleoside 5'-phosphates.. In terms of biological role, possesses two activities: a DNA synthesis (polymerase) and an exonucleolytic activity that degrades single-stranded DNA in the 3'- to 5'-direction. Has a template-primer preference which is characteristic of a replicative DNA polymerase. The protein is DNA polymerase II large subunit of Methanosarcina barkeri (strain Fusaro / DSM 804).